Here is a 148-residue protein sequence, read N- to C-terminus: UPF0260 protein KPN78578_22800 (148 aa).

The protein belongs to the UPF0260 family.

The chain is UPF0260 protein KPN78578_22800 from Klebsiella pneumoniae subsp. pneumoniae (strain ATCC 700721 / MGH 78578).